The chain runs to 154 residues: NADPH-dependent 7-cyano-7-deazaguanine reductase (154 aa).

Residues 1 to 13 (MSKTDVSGLSQLG) are compositionally biased toward polar residues. Residues 1-24 (MSKTDVSGLSQLGRQVDAPTSPET) are disordered. Cysteine 52 acts as the Thioimide intermediate in catalysis. Aspartate 59 acts as the Proton donor in catalysis. Substrate is bound by residues 74–76 (VES) and 93–94 (HE).

It belongs to the GTP cyclohydrolase I family. QueF type 1 subfamily.

It is found in the cytoplasm. The catalysed reaction is 7-aminomethyl-7-carbaguanine + 2 NADP(+) = 7-cyano-7-deazaguanine + 2 NADPH + 3 H(+). It functions in the pathway tRNA modification; tRNA-queuosine biosynthesis. Functionally, catalyzes the NADPH-dependent reduction of 7-cyano-7-deazaguanine (preQ0) to 7-aminomethyl-7-deazaguanine (preQ1). This chain is NADPH-dependent 7-cyano-7-deazaguanine reductase, found in Allorhizobium ampelinum (strain ATCC BAA-846 / DSM 112012 / S4) (Agrobacterium vitis (strain S4)).